The sequence spans 471 residues: Light-independent protochlorophyllide reductase subunit N (471 aa).

[4Fe-4S] cluster contacts are provided by C22, C47, and C107.

Belongs to the BchN/ChlN family. Protochlorophyllide reductase is composed of three subunits; ChlL, ChlN and ChlB. Forms a heterotetramer of two ChlB and two ChlN subunits. [4Fe-4S] cluster is required as a cofactor.

The protein resides in the plastid. The protein localises to the chloroplast. It carries out the reaction chlorophyllide a + oxidized 2[4Fe-4S]-[ferredoxin] + 2 ADP + 2 phosphate = protochlorophyllide a + reduced 2[4Fe-4S]-[ferredoxin] + 2 ATP + 2 H2O. The protein operates within porphyrin-containing compound metabolism; chlorophyll biosynthesis (light-independent). Functionally, component of the dark-operative protochlorophyllide reductase (DPOR) that uses Mg-ATP and reduced ferredoxin to reduce ring D of protochlorophyllide (Pchlide) to form chlorophyllide a (Chlide). This reaction is light-independent. The NB-protein (ChlN-ChlB) is the catalytic component of the complex. The polypeptide is Light-independent protochlorophyllide reductase subunit N (Anthoceros angustus (Hornwort)).